We begin with the raw amino-acid sequence, 299 residues long: Probable lipid kinase YegS-like (299 aa).

A DAGKc domain is found at 2–133; it reads ATYPESLLIL…VDIAQVNDKT (132 aa). ATP contacts are provided by residues T40, 66–72, and T95; that span reads GDGTINE. Mg(2+)-binding residues include L215, D218, and L220. The active-site Proton acceptor is the E271.

The protein belongs to the diacylglycerol/lipid kinase family. YegS lipid kinase subfamily. It depends on Mg(2+) as a cofactor. Ca(2+) is required as a cofactor.

The protein localises to the cytoplasm. Its function is as follows. Probably phosphorylates lipids; the in vivo substrate is unknown. This is Probable lipid kinase YegS-like from Enterobacter sp. (strain 638).